The sequence spans 536 residues: B3 domain-containing protein Os03g0619800 (536 aa).

A DNA-binding region (TF-B3 1) is located at residues 26–119; the sequence is MRCFLRRMAA…RYEVLILDSD (94 aa). The segment at 138–199 is disordered; sequence DKTVDPVDSS…VEPQTPSGSD (62 aa). Low complexity-rich tracts occupy residues 145–160 and 171–183; these read DSSG…SSRS and SSSE…SPSG. Positions 231–330 form a DNA-binding region, TF-B3 2; that stretch reads VAVMKKCNLQ…AFTVHLLQAE (100 aa). The tract at residues 335–396 is disordered; sequence RDGTDVHKIG…SDGPSEPPYI (62 aa). Residues 344–355 show a composition bias toward polar residues; it reads GSSQNKRNSKMA. Basic and acidic residues predominate over residues 372-382; the sequence is SNKHGVSHESL. A DNA-binding region (TF-B3 3) is located at residues 429-529; the sequence is ISKLAGSGGK…TMEVHIISNL (101 aa).

The protein localises to the nucleus. The chain is B3 domain-containing protein Os03g0619800 from Oryza sativa subsp. japonica (Rice).